Consider the following 426-residue polypeptide: CinA-like protein (426 aa).

This sequence belongs to the CinA family.

The protein is CinA-like protein of Gloeobacter violaceus (strain ATCC 29082 / PCC 7421).